Consider the following 624-residue polypeptide: tRNA uridine 5-carboxymethylaminomethyl modification enzyme MnmG (624 aa).

Residues 13–18 (GGGHAG), V125, and S180 each bind FAD. Residue 273-287 (GPRYCPSIEDKIVRF) participates in NAD(+) binding. Q370 contacts FAD.

This sequence belongs to the MnmG family. Homodimer. Heterotetramer of two MnmE and two MnmG subunits. The cofactor is FAD.

It localises to the cytoplasm. Functionally, NAD-binding protein involved in the addition of a carboxymethylaminomethyl (cmnm) group at the wobble position (U34) of certain tRNAs, forming tRNA-cmnm(5)s(2)U34. The sequence is that of tRNA uridine 5-carboxymethylaminomethyl modification enzyme MnmG from Legionella pneumophila subsp. pneumophila (strain Philadelphia 1 / ATCC 33152 / DSM 7513).